The primary structure comprises 439 residues: Adenylosuccinate synthetase (439 aa).

Residues 25 to 31 (GDEGKGK), 53 to 55 (GHT), and lysine 62 contribute to the GTP site. The Proton acceptor role is filled by aspartate 26. Mg(2+) contacts are provided by aspartate 26 and glycine 53. IMP contacts are provided by residues 26-29 (DEGK) and 51-54 (NAGH). Histidine 54 acts as the Proton donor in catalysis. IMP is bound by residues threonine 141, arginine 155, asparagine 232, and threonine 247. Threonine 307 serves as a coordination point for GTP. 307 to 313 (TTTNRPR) is a substrate binding site. IMP is bound at residue arginine 311. GTP is bound by residues arginine 313, 339–341 (KLD), and 425–427 (GVG).

The protein belongs to the adenylosuccinate synthetase family. As to quaternary structure, homodimer. Mg(2+) serves as cofactor.

The protein localises to the cytoplasm. It catalyses the reaction IMP + L-aspartate + GTP = N(6)-(1,2-dicarboxyethyl)-AMP + GDP + phosphate + 2 H(+). Its pathway is purine metabolism; AMP biosynthesis via de novo pathway; AMP from IMP: step 1/2. Plays an important role in the salvage pathway for purine nucleotide biosynthesis. Catalyzes the first committed step in the biosynthesis of AMP from IMP. The sequence is that of Adenylosuccinate synthetase from Plasmodium yoelii yoelii.